Here is a 296-residue protein sequence, read N- to C-terminus: Fructose-bisphosphate aldolase class 1 (296 aa).

Glu175 functions as the Proton acceptor in the catalytic mechanism. The active-site Schiff-base intermediate with dihydroxyacetone-P is the Lys212.

This sequence belongs to the class I fructose-bisphosphate aldolase family.

It carries out the reaction beta-D-fructose 1,6-bisphosphate = D-glyceraldehyde 3-phosphate + dihydroxyacetone phosphate. The protein operates within carbohydrate degradation; glycolysis; D-glyceraldehyde 3-phosphate and glycerone phosphate from D-glucose: step 4/4. This is Fructose-bisphosphate aldolase class 1 from Staphylococcus aureus (strain bovine RF122 / ET3-1).